We begin with the raw amino-acid sequence, 151 residues long: Ubiquitin-like protein 4A-B (151 aa).

Residues 1–76 (MILTIKPLQG…LNLVVRPAGE (76 aa)) form the Ubiquitin-like domain.

In terms of assembly, component of the BAT3 complex.

The protein localises to the cytoplasm. It localises to the cytosol. Functionally, component of the BAT3 complex, a multiprotein complex involved in the post-translational delivery of tail-anchored (TA) membrane proteins to the endoplasmic reticulum membrane. TA membrane proteins, also named type II transmembrane proteins, contain a single C-terminal transmembrane region. This is Ubiquitin-like protein 4A-B (ubl4ab) from Salmo salar (Atlantic salmon).